Consider the following 1003-residue polypeptide: MEDAHAKKWEEVVDYFGVDPERGLALEQVKKNQEKYGPNELPAEEGKSLLTLILEQFDDLLVKILLLAAIISLVLALFEEHDDEAEQLTAYVEPFVILLILIANAVVGVWQEKNAESAIEALKEYEPEMGKVIRADKTGIQKIKARDLVPGDIVEISVGDKIPADLRLISILSTTLRIDQSILTGESVSVIKHTDPVPDPRAVNQDKKNMLFSGTNVSAGKARGVVMGTGLNTAIGSIRTQMFETEEMKTPLQQKLDEFGEQLSKVISVICVAVWAINIGHFNDPAHGGSWIKGAIYYFKIAVALAVAAIPEGLPAVITTCLALGTRRMAKKNAIVRSLPSVETLGCTSVICSDKTGTLTTNQMSVSRMFVFKDIPDDAAPELYQFELTGSTYEPIGETFMQGQKINAADYDAVKEITTICMMCNDSAIDFNEYKQAFEKVGEATETALIVLGEKLNPYNLSKAGKDRRSAALVVREDMDTRWKKEFTLEFSRDRKSMSSYCVPLKAGLLSNGPKMFVKGAPEGVLDRCTHVRVGTKKVPMTPAIMDKILEVTRAYGTGRDTLRCLALATIDDPMDPKDMDIIDSTKFVKYEQNCTFVGVVGMLDPPRKEVLDAIERCRAAGIRVIVITGDNKATAEAICRRIGVFGEDENTEGMAYTGREFDDLSVEGQRDAVARSRLFARVEPFHKSKIVEYLQGMGEISAMTGDGVNDAPALKKAEIGIAMGSGTAVAKSAAEMVLADDNFSTIVAAVEEGRAIYNNMKQFIRYLISSNIGEVVSIFLTAALGLPEALIPVQLLWVNLVTDGLPATALGFNPPDLDIMNKPPRRADEGLITGWLFFRYMAIGTYVGAATVGAAAHWFMMSPTGPGLNFYQLSHHLQCTPENEYFEGIDCEIFSDPHPMTMALSVLVTIEMLNAINSLSENQSLLVMPPWSNIWLISAICLSMTLHFVILYVEILSTVFQICPLTLTEWIVVLKISFPVLLLDEVLKFVARKYTDEFSFIK.

Residues 1–59 (MEDAHAKKWEEVVDYFGVDPERGLALEQVKKNQEKYGPNELPAEEGKSLLTLILEQFDD) are Cytoplasmic-facing. The chain crosses the membrane as a helical span at residues 60 to 78 (LLVKILLLAAIISLVLALF). The Extracellular portion of the chain corresponds to 79–89 (EEHDDEAEQLT). Residues 90–110 (AYVEPFVILLILIANAVVGVW) traverse the membrane as a helical segment. Over 111–262 (QEKNAESAIE…QQKLDEFGEQ (152 aa)) the chain is Cytoplasmic. The chain crosses the membrane as a helical span at residues 263–282 (LSKVISVICVAVWAINIGHF). Over 283–300 (NDPAHGGSWIKGAIYYFK) the chain is Extracellular. Residues 301-318 (IAVALAVAAIPEGLPAVI) traverse the membrane as a helical segment. Over 319 to 775 (TTCLALGTRR…RYLISSNIGE (457 aa)) the chain is Cytoplasmic. Catalysis depends on D354, which acts as the 4-aspartylphosphate intermediate. K519 serves as a coordination point for ATP. Residues 776–799 (VVSIFLTAALGLPEALIPVQLLWV) traverse the membrane as a helical segment. Over 800–840 (NLVTDGLPATALGFNPPDLDIMNKPPRRADEGLITGWLFFR) the chain is Extracellular. The helical transmembrane segment at 841 to 863 (YMAIGTYVGAATVGAAAHWFMMS) threads the bilayer. The Cytoplasmic portion of the chain corresponds to 864-898 (PTGPGLNFYQLSHHLQCTPENEYFEGIDCEIFSDP). Residues 899-917 (HPMTMALSVLVTIEMLNAI) traverse the membrane as a helical segment. The Extracellular segment spans residues 918–934 (NSLSENQSLLVMPPWSN). Residues 935 to 954 (IWLISAICLSMTLHFVILYV) traverse the membrane as a helical segment. Residues 955–1003 (EILSTVFQICPLTLTEWIVVLKISFPVLLLDEVLKFVARKYTDEFSFIK) are Cytoplasmic-facing.

This sequence belongs to the cation transport ATPase (P-type) (TC 3.A.3) family.

It is found in the sarcoplasmic reticulum membrane. It catalyses the reaction Ca(2+)(in) + ATP + H2O = Ca(2+)(out) + ADP + phosphate + H(+). In terms of biological role, this magnesium-dependent enzyme catalyzes the hydrolysis of ATP coupled with the transport of the calcium. The sequence is that of Calcium-transporting ATPase sarcoplasmic/endoplasmic reticulum type from Artemia franciscana (Brine shrimp).